A 105-amino-acid chain; its full sequence is Large ribosomal subunit protein uL24 (105 aa).

It belongs to the universal ribosomal protein uL24 family. In terms of assembly, part of the 50S ribosomal subunit.

One of two assembly initiator proteins, it binds directly to the 5'-end of the 23S rRNA, where it nucleates assembly of the 50S subunit. In terms of biological role, one of the proteins that surrounds the polypeptide exit tunnel on the outside of the subunit. This chain is Large ribosomal subunit protein uL24, found in Xylella fastidiosa (strain M23).